A 219-amino-acid chain; its full sequence is Thiamine-phosphate synthase (219 aa).

Residues 48 to 52 (QFRQK) and Asn84 each bind 4-amino-2-methyl-5-(diphosphooxymethyl)pyrimidine. Residues Asp85 and Asp104 each coordinate Mg(2+). Position 123 (Ser123) interacts with 4-amino-2-methyl-5-(diphosphooxymethyl)pyrimidine. 150–152 (TPS) lines the 2-[(2R,5Z)-2-carboxy-4-methylthiazol-5(2H)-ylidene]ethyl phosphate pocket. Lys153 contacts 4-amino-2-methyl-5-(diphosphooxymethyl)pyrimidine. 2-[(2R,5Z)-2-carboxy-4-methylthiazol-5(2H)-ylidene]ethyl phosphate contacts are provided by residues Gly181 and 199–200 (IS).

This sequence belongs to the thiamine-phosphate synthase family. Mg(2+) is required as a cofactor.

The catalysed reaction is 2-[(2R,5Z)-2-carboxy-4-methylthiazol-5(2H)-ylidene]ethyl phosphate + 4-amino-2-methyl-5-(diphosphooxymethyl)pyrimidine + 2 H(+) = thiamine phosphate + CO2 + diphosphate. The enzyme catalyses 2-(2-carboxy-4-methylthiazol-5-yl)ethyl phosphate + 4-amino-2-methyl-5-(diphosphooxymethyl)pyrimidine + 2 H(+) = thiamine phosphate + CO2 + diphosphate. It carries out the reaction 4-methyl-5-(2-phosphooxyethyl)-thiazole + 4-amino-2-methyl-5-(diphosphooxymethyl)pyrimidine + H(+) = thiamine phosphate + diphosphate. Its pathway is cofactor biosynthesis; thiamine diphosphate biosynthesis; thiamine phosphate from 4-amino-2-methyl-5-diphosphomethylpyrimidine and 4-methyl-5-(2-phosphoethyl)-thiazole: step 1/1. Its function is as follows. Condenses 4-methyl-5-(beta-hydroxyethyl)thiazole monophosphate (THZ-P) and 2-methyl-4-amino-5-hydroxymethyl pyrimidine pyrophosphate (HMP-PP) to form thiamine monophosphate (TMP). The polypeptide is Thiamine-phosphate synthase (Helicobacter pylori (strain ATCC 700392 / 26695) (Campylobacter pylori)).